The chain runs to 330 residues: D-alanine--D-alanine ligase (330 aa).

Residues 122-323 (NRFLSGFGIR…MKEVLCTIIR (202 aa)) enclose the ATP-grasp domain. 151–206 (IARMGLPLFVKPNVGGSSIATTKVVEAAQLLPAIEQAFSEGEEVMIERLICGTEVT) contributes to the ATP binding site. Positions 277, 290, and 292 each coordinate Mg(2+).

It belongs to the D-alanine--D-alanine ligase family. The cofactor is Mg(2+). Mn(2+) serves as cofactor.

The protein localises to the cytoplasm. The catalysed reaction is 2 D-alanine + ATP = D-alanyl-D-alanine + ADP + phosphate + H(+). It functions in the pathway cell wall biogenesis; peptidoglycan biosynthesis. Cell wall formation. This chain is D-alanine--D-alanine ligase, found in Porphyromonas gingivalis (strain ATCC BAA-308 / W83).